A 55-amino-acid chain; its full sequence is Large ribosomal subunit protein bL33 (55 aa).

It belongs to the bacterial ribosomal protein bL33 family.

This Erythrobacter litoralis (strain HTCC2594) protein is Large ribosomal subunit protein bL33.